The following is an 84-amino-acid chain: Large ribosomal subunit protein bL27 (84 aa).

Positions 1 to 21 are disordered; it reads MATKKAGGSSRNGRDSAGRRL.

This sequence belongs to the bacterial ribosomal protein bL27 family.

The protein is Large ribosomal subunit protein bL27 of Pelagibacter ubique (strain HTCC1062).